A 276-amino-acid chain; its full sequence is Sec-independent protein translocase protein TatC (276 aa).

A disordered region spans residues 1–29; sequence MVSLTSVPPYADATPDTRASSGPAPGRRK. A run of 6 helical transmembrane segments spans residues 49-69, 103-123, 136-156, 187-207, 221-241, and 242-262; these read GGLV…LVLL, LFLA…AFVT, GFLG…WWVL, LVLA…LNLA, WAVL…DALT, and MVLV…VAVW.

This sequence belongs to the TatC family. As to quaternary structure, the Tat system comprises two distinct complexes: a TatABC complex, containing multiple copies of TatA, TatB and TatC subunits, and a separate TatA complex, containing only TatA subunits. Substrates initially bind to the TatABC complex, which probably triggers association of the separate TatA complex to form the active translocon.

It is found in the cell membrane. Functionally, part of the twin-arginine translocation (Tat) system that transports large folded proteins containing a characteristic twin-arginine motif in their signal peptide across membranes. Together with TatB, TatC is part of a receptor directly interacting with Tat signal peptides. The protein is Sec-independent protein translocase protein TatC of Xylanimonas cellulosilytica (strain DSM 15894 / JCM 12276 / CECT 5975 / KCTC 9989 / LMG 20990 / NBRC 107835 / XIL07).